A 341-amino-acid chain; its full sequence is Phosphate acyltransferase (341 aa).

Belongs to the PlsX family. Homodimer. Probably interacts with PlsY.

It is found in the cytoplasm. The catalysed reaction is a fatty acyl-[ACP] + phosphate = an acyl phosphate + holo-[ACP]. It functions in the pathway lipid metabolism; phospholipid metabolism. Catalyzes the reversible formation of acyl-phosphate (acyl-PO(4)) from acyl-[acyl-carrier-protein] (acyl-ACP). This enzyme utilizes acyl-ACP as fatty acyl donor, but not acyl-CoA. The chain is Phosphate acyltransferase from Saccharophagus degradans (strain 2-40 / ATCC 43961 / DSM 17024).